The sequence spans 312 residues: Bifunctional pinoresinol-lariciresinol reductase 1 (312 aa).

Residues Gly-10–Gly-16, Arg-35, and Lys-44 contribute to the NADP(+) site. Lys-136 serves as the catalytic Proton acceptor. Arg-140 contacts NADP(+). Residue His-268 participates in substrate binding.

This sequence belongs to the NmrA-type oxidoreductase family. Isoflavone reductase subfamily. Dimer. In terms of tissue distribution, expressed in seeds and roots, but not in stems. Detected in leaves.

The enzyme catalyses (-)-lariciresinol + NADP(+) = (-)-pinoresinol + NADPH + H(+). It carries out the reaction (+)-secoisolariciresinol + NADP(+) = (-)-lariciresinol + NADPH + H(+). In terms of biological role, reductase involved in lignan biosynthesis. Catalyzes the enantioselective conversion of (-)-pinoresinol into (-)-lariciresinol and of (-)-lariciresinol into (+)-secoisolariciresinol. Abstracts the 4R-hydride from the NADPH cofactor during catalysis. The chain is Bifunctional pinoresinol-lariciresinol reductase 1 (PLR_Lu1) from Linum usitatissimum (Flax).